We begin with the raw amino-acid sequence, 916 residues long: MASLIEKLLRTGDKKTLRQLRNYADSINALEDSFKTFTDAELREETDRLRERHQDGEKLDNLLPEAFAAVREASSRTLGMRHFDVQLMGGAALHLGNIAEMKTGEGKTLVATAPAYLNALTGKGVHVVTVNDYLAEYQSDLMGRVYRFLGLTSGCILANQDPAVRREQYAADITYGTNNEFGFDYLRDNMAWDRNELVQRGHNFAIVDEVDSILIDEARTPLIISGPAQGDTNRWYSEFAKVVLRLQPEKDYEVDEKKRTVGVLEGGIEKVEDYLGISNLYESANTPLIGFLNNAIKAKELFKRDKDYVIMDGEVLIVDEHTGRILAGRRYNEGMHQAIEAKEGVEIKAENQTLATVTLQNYFRMYGKLSGMTGTAETEAAEFMSTYKLGVVAIPTNRDMQRIDQSDLVFKNETVKFDAVVRDIAERHEKGQPVLVGTTSVEKSEYLSRLLAKDGIRHEVLNAKNHAREAAIVAQAGRKAAVTVATNMAGRGTDIMLGGNAEFTAVAELAKRGLDPEENSEEYESAWPAALEAAKQAVKDEHEEVLNLGGLYVLGTERHESRRIDNQLRGRSGRQGDPGESRFYLSLTDDLMRLFNSGAAERLMNSSVPDDVALESKLVSRAIASAQGQVEGRNAEQRKNVLKYDDVLNRQREAIYSDRRRILEGDDLHEKVQFFVEDTIMALIDDATAGGNGDDWDFHQLWTNLKTLYPVSVSADDIIEEAGGKSRLTVEFLKEELLSDARLVYQAREESIGSESMRELERRVVLSVIGRKWQEHLYEMDYLKEGIGLRAMAQRDPLVEYQREGFTLFQSMMEAIREESVGFLFNLEVEVTPAQDVVVEDAAGGHTEHVEPQVRAAGLEAPEKPAQLQYTAPSEGGGTQTRVETRSTGRSGNPAKAAEQDAAKDAAKRPAKKKRR.

Residues Gln86, 104-108 (GEGKT), and Asp494 each bind ATP. The interval 859–916 (LEAPEKPAQLQYTAPSEGGGTQTRVETRSTGRSGNPAKAAEQDAAKDAAKRPAKKKRR) is disordered. Residues 880–891 (QTRVETRSTGRS) are compositionally biased toward polar residues. Basic and acidic residues predominate over residues 898–908 (AEQDAAKDAAK).

Belongs to the SecA family. As to quaternary structure, monomer and homodimer. Part of the essential Sec protein translocation apparatus which comprises SecA, SecYEG and auxiliary proteins SecDF. Other proteins may also be involved.

Its subcellular location is the cell membrane. It localises to the cytoplasm. It carries out the reaction ATP + H2O + cellular proteinSide 1 = ADP + phosphate + cellular proteinSide 2.. Functionally, part of the Sec protein translocase complex. Interacts with the SecYEG preprotein conducting channel. Has a central role in coupling the hydrolysis of ATP to the transfer of proteins into and across the cell membrane, serving as an ATP-driven molecular motor driving the stepwise translocation of polypeptide chains across the membrane. The polypeptide is Protein translocase subunit SecA (Pseudarthrobacter chlorophenolicus (strain ATCC 700700 / DSM 12829 / CIP 107037 / JCM 12360 / KCTC 9906 / NCIMB 13794 / A6) (Arthrobacter chlorophenolicus)).